The sequence spans 374 residues: Large ribosomal subunit protein uL4 (374 aa).

Positions 336–355 (EKAMAKGMQNKKNREARHAA) are disordered.

This sequence belongs to the universal ribosomal protein uL4 family.

This Trypanosoma brucei brucei protein is Large ribosomal subunit protein uL4 (RPL4).